The primary structure comprises 121 residues: Large ribosomal subunit protein uL14 (121 aa).

Belongs to the universal ribosomal protein uL14 family. In terms of assembly, part of the 50S ribosomal subunit. Forms a cluster with proteins L3 and L19. In the 70S ribosome, L14 and L19 interact and together make contacts with the 16S rRNA in bridges B5 and B8.

In terms of biological role, binds to 23S rRNA. Forms part of two intersubunit bridges in the 70S ribosome. In Porphyromonas gingivalis (strain ATCC 33277 / DSM 20709 / CIP 103683 / JCM 12257 / NCTC 11834 / 2561), this protein is Large ribosomal subunit protein uL14.